A 135-amino-acid polypeptide reads, in one-letter code: MSVRRIAIRCLNYGKPQNPAYNASSSMRIEPIKRTGETRETKKARLVYQSRKRGILESDLLLSRFAKKHLDSLSDSQLDEYDQLLDEPDWDIYYWATKNYDVTPLPDRWKDSEILKMLQKDAQNEDREIMRMPEL.

This sequence belongs to the SDHAF2 family. In terms of assembly, interacts with the flavoprotein subunit within the SDH catalytic dimer.

The protein localises to the mitochondrion matrix. Its function is as follows. Plays an essential role in the assembly of succinate dehydrogenase (SDH), an enzyme complex (also referred to as respiratory complex II) that is a component of both the tricarboxylic acid (TCA) cycle and the mitochondrial electron transport chain, and which couples the oxidation of succinate to fumarate with the reduction of ubiquinone (coenzyme Q) to ubiquinol. Required for flavinylation (covalent attachment of FAD) of the flavoprotein subunit of the SDH catalytic dimer. The protein is Succinate dehydrogenase assembly factor 2, mitochondrial of Meyerozyma guilliermondii (strain ATCC 6260 / CBS 566 / DSM 6381 / JCM 1539 / NBRC 10279 / NRRL Y-324) (Yeast).